A 36-amino-acid chain; its full sequence is Potassium channel toxin alpha-KTx 23.1 (36 aa).

4 disulfides stabilise this stretch: cysteine 6–cysteine 26, cysteine 12–cysteine 31, cysteine 16–cysteine 33, and cysteine 21–cysteine 36. Cysteine 36 is modified (cysteine amide).

This sequence belongs to the short scorpion toxin superfamily. Potassium channel inhibitor family. Alpha-KTx 23 subfamily. As to expression, expressed by the venom gland.

It localises to the secreted. In terms of biological role, voltage-gated potassium channel inhibitor. Selectively and irreversibly binds (K(d)=2.9 pM) and blocks hKv1.3/KCNA3 potassium channels of human T-lymphocytes. Weakly blocks hKCa3.1/KCNN4, mKv1.1/KCNA1, and hKv1.2/KCNA2 channels. In vivo, high doses (200 ug) produce no symptoms of intoxication when injected into mice. In Vaejovis mexicanus smithi (Mexican scorpion), this protein is Potassium channel toxin alpha-KTx 23.1.